We begin with the raw amino-acid sequence, 158 residues long: MTHAFTHINADGNAHMVDVTDKSVTEREARAEAYIEMASETLEMIMSGSHHKGDVFATARIAGIQAAKKTSDLIPLCHPLMLTKVEVELEAQPEHNRVWIRSLCKLSGKTGVEMEALTAASTAALTIYDMCKAVQKDMVISQVRLTEKRGGKSGHFKV.

Substrate contacts are provided by residues 76 to 78 (LCH) and 114 to 115 (ME). D129 is an active-site residue.

This sequence belongs to the MoaC family. In terms of assembly, homohexamer; trimer of dimers.

The enzyme catalyses (8S)-3',8-cyclo-7,8-dihydroguanosine 5'-triphosphate = cyclic pyranopterin phosphate + diphosphate. The protein operates within cofactor biosynthesis; molybdopterin biosynthesis. Catalyzes the conversion of (8S)-3',8-cyclo-7,8-dihydroguanosine 5'-triphosphate to cyclic pyranopterin monophosphate (cPMP). The protein is Cyclic pyranopterin monophosphate synthase of Shewanella halifaxensis (strain HAW-EB4).